The following is a 323-amino-acid chain: tRNA U34 carboxymethyltransferase (323 aa).

Residues K91, W105, K110, G130, 152 to 154 (DPS), 181 to 182 (IE), M196, Y200, and R315 contribute to the carboxy-S-adenosyl-L-methionine site.

The protein belongs to the class I-like SAM-binding methyltransferase superfamily. CmoB family. In terms of assembly, homotetramer.

It carries out the reaction carboxy-S-adenosyl-L-methionine + 5-hydroxyuridine(34) in tRNA = 5-carboxymethoxyuridine(34) in tRNA + S-adenosyl-L-homocysteine + H(+). In terms of biological role, catalyzes carboxymethyl transfer from carboxy-S-adenosyl-L-methionine (Cx-SAM) to 5-hydroxyuridine (ho5U) to form 5-carboxymethoxyuridine (cmo5U) at position 34 in tRNAs. In Vibrio campbellii (strain ATCC BAA-1116), this protein is tRNA U34 carboxymethyltransferase.